The chain runs to 132 residues: Small ribosomal subunit protein uS8 (132 aa).

Belongs to the universal ribosomal protein uS8 family. As to quaternary structure, part of the 30S ribosomal subunit. Contacts proteins S5 and S12.

In terms of biological role, one of the primary rRNA binding proteins, it binds directly to 16S rRNA central domain where it helps coordinate assembly of the platform of the 30S subunit. The chain is Small ribosomal subunit protein uS8 from Bacillus anthracis (strain A0248).